Consider the following 142-residue polypeptide: Large ribosomal subunit protein uL11 (142 aa).

This sequence belongs to the universal ribosomal protein uL11 family. As to quaternary structure, part of the ribosomal stalk of the 50S ribosomal subunit. Interacts with L10 and the large rRNA to form the base of the stalk. L10 forms an elongated spine to which L12 dimers bind in a sequential fashion forming a multimeric L10(L12)X complex. One or more lysine residues are methylated.

Functionally, forms part of the ribosomal stalk which helps the ribosome interact with GTP-bound translation factors. In Pectobacterium atrosepticum (strain SCRI 1043 / ATCC BAA-672) (Erwinia carotovora subsp. atroseptica), this protein is Large ribosomal subunit protein uL11.